Here is a 544-residue protein sequence, read N- to C-terminus: Membrane protein insertase YidC (544 aa).

Residues 6–26 (NLLLIALLFVTFMLWQAWETD) traverse the membrane as a helical segment. The tract at residues 112–132 (SGLTGKNGPDNPANGPRPLFT) is disordered. 4 helical membrane-spanning segments follow: residues 343–363 (KFLH…TFIV), 418–438 (LGGC…YYML), 456–476 (LSAQ…MFFI), and 497–517 (PVIF…YYIV).

This sequence belongs to the OXA1/ALB3/YidC family. Type 1 subfamily. Interacts with the Sec translocase complex via SecD. Specifically interacts with transmembrane segments of nascent integral membrane proteins during membrane integration.

It localises to the cell inner membrane. Required for the insertion and/or proper folding and/or complex formation of integral membrane proteins into the membrane. Involved in integration of membrane proteins that insert both dependently and independently of the Sec translocase complex, as well as at least some lipoproteins. Aids folding of multispanning membrane proteins. This is Membrane protein insertase YidC from Pectobacterium carotovorum subsp. carotovorum (strain PC1).